The sequence spans 251 residues: Triosephosphate isomerase (251 aa).

9–11 contacts substrate; it reads NWK. Histidine 95 acts as the Electrophile in catalysis. Glutamate 167 acts as the Proton acceptor in catalysis. Substrate contacts are provided by residues glycine 173, serine 213, and 234–235; that span reads GG.

The protein belongs to the triosephosphate isomerase family. In terms of assembly, homodimer.

The protein resides in the cytoplasm. The catalysed reaction is D-glyceraldehyde 3-phosphate = dihydroxyacetone phosphate. Its pathway is carbohydrate biosynthesis; gluconeogenesis. It participates in carbohydrate degradation; glycolysis; D-glyceraldehyde 3-phosphate from glycerone phosphate: step 1/1. Involved in the gluconeogenesis. Catalyzes stereospecifically the conversion of dihydroxyacetone phosphate (DHAP) to D-glyceraldehyde-3-phosphate (G3P). This chain is Triosephosphate isomerase, found in Latilactobacillus sakei subsp. sakei (strain 23K) (Lactobacillus sakei subsp. sakei).